The chain runs to 382 residues: Queuine tRNA-ribosyltransferase (382 aa).

Aspartate 96 acts as the Proton acceptor in catalysis. Residues 96 to 100 (DSGGF), aspartate 151, glutamine 194, and glycine 221 contribute to the substrate site. The segment at 252-258 (GVGAPDS) is RNA binding. The active-site Nucleophile is aspartate 271. Positions 276–280 (TRIAR) are RNA binding; important for wobble base 34 recognition. Zn(2+) contacts are provided by cysteine 309, cysteine 311, cysteine 314, and histidine 340.

The protein belongs to the queuine tRNA-ribosyltransferase family. Homodimer. Within each dimer, one monomer is responsible for RNA recognition and catalysis, while the other monomer binds to the replacement base PreQ1. Requires Zn(2+) as cofactor.

It carries out the reaction 7-aminomethyl-7-carbaguanine + guanosine(34) in tRNA = 7-aminomethyl-7-carbaguanosine(34) in tRNA + guanine. It participates in tRNA modification; tRNA-queuosine biosynthesis. Its function is as follows. Catalyzes the base-exchange of a guanine (G) residue with the queuine precursor 7-aminomethyl-7-deazaguanine (PreQ1) at position 34 (anticodon wobble position) in tRNAs with GU(N) anticodons (tRNA-Asp, -Asn, -His and -Tyr). Catalysis occurs through a double-displacement mechanism. The nucleophile active site attacks the C1' of nucleotide 34 to detach the guanine base from the RNA, forming a covalent enzyme-RNA intermediate. The proton acceptor active site deprotonates the incoming PreQ1, allowing a nucleophilic attack on the C1' of the ribose to form the product. After dissociation, two additional enzymatic reactions on the tRNA convert PreQ1 to queuine (Q), resulting in the hypermodified nucleoside queuosine (7-(((4,5-cis-dihydroxy-2-cyclopenten-1-yl)amino)methyl)-7-deazaguanosine). The protein is Queuine tRNA-ribosyltransferase of Lactococcus lactis subsp. cremoris (strain SK11).